We begin with the raw amino-acid sequence, 373 residues long: Chaperone protein DnaJ (373 aa).

The region spanning 4–68 is the J domain; the sequence is NYYQILGVSK…QKRAAYDRLG (65 aa). The CR-type zinc-finger motif lies at 136-214; it reads GIEKNINFSS…CHGMGRYHKQ (79 aa). 8 residues coordinate Zn(2+): cysteine 149, cysteine 152, cysteine 166, cysteine 169, cysteine 188, cysteine 191, cysteine 202, and cysteine 205. CXXCXGXG motif repeat units follow at residues 149–156, 166–173, 188–195, and 202–209; these read CDTCHGSG, CDACSGVG, CHKCQGNG, and CKKCHGMG.

The protein belongs to the DnaJ family. Homodimer. It depends on Zn(2+) as a cofactor.

It localises to the cytoplasm. In terms of biological role, participates actively in the response to hyperosmotic and heat shock by preventing the aggregation of stress-denatured proteins and by disaggregating proteins, also in an autonomous, DnaK-independent fashion. Unfolded proteins bind initially to DnaJ; upon interaction with the DnaJ-bound protein, DnaK hydrolyzes its bound ATP, resulting in the formation of a stable complex. GrpE releases ADP from DnaK; ATP binding to DnaK triggers the release of the substrate protein, thus completing the reaction cycle. Several rounds of ATP-dependent interactions between DnaJ, DnaK and GrpE are required for fully efficient folding. Also involved, together with DnaK and GrpE, in the DNA replication of plasmids through activation of initiation proteins. The chain is Chaperone protein DnaJ from Rickettsia rickettsii (strain Iowa).